The chain runs to 113 residues: Endoribonuclease SymE (113 aa).

The SpoVT-AbrB domain occupies 29–74 (SRYPDYSRIPAITLKGQWLEAAGFATGTAVVVKVMEGCIVLTAQPA).

The protein belongs to the SymE family.

It is found in the cytoplasm. Its function is as follows. Involved in the degradation and recycling of damaged RNA. It is itself a target for degradation by the ATP-dependent protease Lon. The chain is Endoribonuclease SymE from Escherichia coli (strain ATCC 8739 / DSM 1576 / NBRC 3972 / NCIMB 8545 / WDCM 00012 / Crooks).